A 178-amino-acid polypeptide reads, in one-letter code: Protein GrpE (178 aa).

This sequence belongs to the GrpE family. Homodimer.

The protein localises to the cytoplasm. In terms of biological role, participates actively in the response to hyperosmotic and heat shock by preventing the aggregation of stress-denatured proteins, in association with DnaK and GrpE. It is the nucleotide exchange factor for DnaK and may function as a thermosensor. Unfolded proteins bind initially to DnaJ; upon interaction with the DnaJ-bound protein, DnaK hydrolyzes its bound ATP, resulting in the formation of a stable complex. GrpE releases ADP from DnaK; ATP binding to DnaK triggers the release of the substrate protein, thus completing the reaction cycle. Several rounds of ATP-dependent interactions between DnaJ, DnaK and GrpE are required for fully efficient folding. The protein is Protein GrpE of Rickettsia typhi (strain ATCC VR-144 / Wilmington).